The primary structure comprises 201 residues: 3-isopropylmalate dehydratase small subunit (201 aa).

It belongs to the LeuD family. LeuD type 1 subfamily. Heterodimer of LeuC and LeuD.

It carries out the reaction (2R,3S)-3-isopropylmalate = (2S)-2-isopropylmalate. The protein operates within amino-acid biosynthesis; L-leucine biosynthesis; L-leucine from 3-methyl-2-oxobutanoate: step 2/4. Catalyzes the isomerization between 2-isopropylmalate and 3-isopropylmalate, via the formation of 2-isopropylmaleate. This Escherichia coli O9:H4 (strain HS) protein is 3-isopropylmalate dehydratase small subunit.